The sequence spans 517 residues: MDIVGGQNLRQMWDDLAGVYGDKTALIFESCEGIVRQFSYASLNEEINRTANLFYSLGIRKGDRVALHLDNCPEFIFCWFGLAKIGAIMVPINARLLGEESAWILQNSQVSLLVTSVQFYPMYREIHQDNSTPLNHICLIGEQLPADDGVSHFSQLQARQSATLCYTPALSTDDTAEILFTSGTTSRPKGVVITHYNLRFAGYYSAWQIALRDDDVYMTVMPAFHIDCQCTAAMPAFSAGSTFVLLEKYSARAFWDQVRRYQATVTECIPMMIRTLMVQPAAPTDRQHHLREVMFYLNLSAQEKDAFTERFGVRLLTSYGMTETIVGIIGDRPGDKRRWPSIGRVGFSYEAEIRDDQNRPLPAGEIGEICIKGIPGKTIFKEYYMQPEATAGALEPEGWLHTGDSGYQDEDGYFYFVDRRCNMIKRGGENVSCVELENIISAHPKIQDIVVVGIKDAIRDEAIKAFIVLNEGETLSEAEFFSFCENNMAKFKVPSFMEIRTDLPRNCSGKIIKKNLK.

Belongs to the ATP-dependent AMP-binding enzyme family.

It carries out the reaction 4-(trimethylamino)butanoate + ATP + CoA = 4-(trimethylamino)butanoyl-CoA + AMP + diphosphate. The enzyme catalyses crotonobetaine + ATP + CoA = crotonobetainyl-CoA + AMP + diphosphate. The catalysed reaction is (R)-carnitine + ATP + CoA = (R)-carnitinyl-CoA + AMP + diphosphate. Its pathway is amine and polyamine metabolism; carnitine metabolism. Functionally, catalyzes the transfer of CoA to carnitine, generating the initial carnitinyl-CoA needed for the CaiB reaction cycle. Also has activity toward crotonobetaine and gamma-butyrobetaine. The sequence is that of Crotonobetaine/carnitine--CoA ligase from Salmonella paratyphi C (strain RKS4594).